Here is a 261-residue protein sequence, read N- to C-terminus: Ribonuclease PH (261 aa).

Phosphate-binding positions include Arg-87 and 125–127 (GTR).

Belongs to the RNase PH family. Homohexameric ring arranged as a trimer of dimers.

The enzyme catalyses tRNA(n+1) + phosphate = tRNA(n) + a ribonucleoside 5'-diphosphate. Functionally, phosphorolytic 3'-5' exoribonuclease that plays an important role in tRNA 3'-end maturation. Removes nucleotide residues following the 3'-CCA terminus of tRNAs; can also add nucleotides to the ends of RNA molecules by using nucleoside diphosphates as substrates, but this may not be physiologically important. Probably plays a role in initiation of 16S rRNA degradation (leading to ribosome degradation) during starvation. The polypeptide is Ribonuclease PH (Caldanaerobacter subterraneus subsp. tengcongensis (strain DSM 15242 / JCM 11007 / NBRC 100824 / MB4) (Thermoanaerobacter tengcongensis)).